The sequence spans 150 residues: Retinal rod rhodopsin-sensitive cGMP 3',5'-cyclic phosphodiesterase subunit delta (150 aa).

Residues 144 to 150 (RVRLFYV) are required for association with membranes.

Belongs to the PDE6D/unc-119 family. As to quaternary structure, interacts with the prenylated catalytic subunits of PDE6, an oligomer composed of two catalytic chains (PDE6A and PDE6B) and two inhibitory chains (gamma); has no effect on enzyme activity but promotes the release of the prenylated enzyme from cell membrane. Interacts with prenylated GRK1 and GRK7. Interacts with prenylated Ras family members, including RAP2A and RAP2C. Interacts with prenylated RHEB and NRAS. Interacts with prenylated HRAS and KRAS. Interacts with RAB13 (prenylated form); dissociates RAB13 from membranes. Interacts with prenylated INPP5E. Interacts with RAB28 (prenylated form); the interaction promotes RAB28 delivery to the photoreceptor outer segments. Interacts with RPGR. Interacts with ARL2. Interacts with ARL3; the interaction occurs specifically with the GTP-bound form of ARL3. Interaction with ARL2 and ARL3 promotes release of farnesylated cargo proteins. Widely expressed. Detected in various tissues including spleen, prostate gland, testis, ovary, small intestine, colon, retina, and peripheral blood.

It is found in the cytoplasm. Its subcellular location is the cytosol. It localises to the cytoplasmic vesicle membrane. The protein resides in the cytoskeleton. The protein localises to the cilium basal body. In terms of biological role, promotes the release of prenylated target proteins from cellular membranes. Modulates the activity of prenylated or palmitoylated Ras family members by regulating their subcellular location. Required for normal ciliary targeting of farnesylated target proteins, such as INPP5E. Required for RAB28 localization to the cone cell outer segments in the retina. Modulates the subcellular location of target proteins by acting as a GTP specific dissociation inhibitor (GDI). Increases the affinity of ARL3 for GTP by several orders of magnitude. Stabilizes ARL3-GTP by decreasing the nucleotide dissociation rate. The protein is Retinal rod rhodopsin-sensitive cGMP 3',5'-cyclic phosphodiesterase subunit delta (PDE6D) of Homo sapiens (Human).